Here is a 297-residue protein sequence, read N- to C-terminus: Adrenocorticotropic hormone receptor (297 aa).

Residues 1–23 (MKHITDLYESVNSTMSNKSDCPP) lie on the Extracellular side of the membrane. 2 N-linked (GlcNAc...) asparagine glycosylation sites follow: Asn12 and Asn17. Cystine bridges form between Cys21-Cys253 and Cys245-Cys251. Residues 24 to 49 (VVLPEEVFFTISVIGVLENLIVLLAV) traverse the membrane as a helical segment. Topologically, residues 50-58 (IKNKNLQSP) are cytoplasmic. The helical transmembrane segment at 59–79 (MYFFICSLAISDMLGSLYKIL) threads the bilayer. At 80–104 (ENILIIFRNMGYLEPRGGFESTADD) the chain is on the extracellular side. The helical transmembrane segment at 105-126 (VVDSLFILSLLGSICSLSAIAA) threads the bilayer. Residues 127 to 147 (DRYITIFHALQYQRLVTPRRA) are Cytoplasmic-facing. A helical transmembrane segment spans residues 148-168 (AVVLLIIWACCIGSGITIVTF). The Extracellular segment spans residues 169–180 (SHHVPAVIAFTA). The chain crosses the membrane as a helical span at residues 181-199 (LFPLMLVFILCLYGHMFLL). Topologically, residues 200–217 (ARSHARRVSTLPRANMKG) are cytoplasmic. Residues 218–244 (AITLTVLLGVFIFCWAPFVLHILLMTF) traverse the membrane as a helical segment. Over 245–256 (CPADPYCACYLA) the chain is Extracellular. Residues 257–278 (LFQVNAVLIMCNAIIDPFIYAF) form a helical membrane-spanning segment. Over 279–297 (RSPELRDAFKKMIICKRYP) the chain is Cytoplasmic. Residue Cys293 is the site of S-palmitoyl cysteine attachment.

It belongs to the G-protein coupled receptor 1 family. As to quaternary structure, homodimer. Interacts with corticotropin (ACTH). Interacts with MRAP; this interaction targets MC2R to the plasma membrane. Interacts with MRAP2; competing with MRAP for binding to MC2R and impairing the binding of corticotropin (ACTH). In terms of processing, ubiquitinated by MGRN1 that may be involved in post-endocytic trafficking and/or degradation of internalized receptor. As to expression, expressed in skin and adrenal gland tissues.

The protein localises to the cell membrane. Hormone receptor primarily expressed in adrenal cortex that plays a key role in regulating adrenocortical function. Upon corticotropin (ACTH) binding, facilitates the release of adrenal glucocorticoids, including cortisol and corticosterone. In addition, MC2R is required for fetal and neonatal adrenal gland development. Mechanistically, activates adenylate cyclase (cAMP), the MAPK cascade as well as the cAMP-dependent protein kinase A pathway leading to steroidogenic factor 1/NR5A1-mediated transcriptional activation. This chain is Adrenocorticotropic hormone receptor (MC2R), found in Sus scrofa (Pig).